A 432-amino-acid chain; its full sequence is D-amino acid dehydrogenase (432 aa).

Residue 3-17 (VVILGSGVVGVTSAW) coordinates FAD.

The protein belongs to the DadA oxidoreductase family. FAD is required as a cofactor.

The catalysed reaction is a D-alpha-amino acid + A + H2O = a 2-oxocarboxylate + AH2 + NH4(+). Its pathway is amino-acid degradation; D-alanine degradation; NH(3) and pyruvate from D-alanine: step 1/1. Its function is as follows. Oxidative deamination of D-amino acids. The sequence is that of D-amino acid dehydrogenase from Salmonella dublin (strain CT_02021853).